The following is a 236-amino-acid chain: Transcriptional activator protein SolR (236 aa).

The HTH luxR-type domain maps to 169 to 234 (VPESNAVLTT…QAVVKAIATG (66 aa)). A DNA-binding region (H-T-H motif) is located at residues 193–212 (AYEIGQILRISERTVNFHVN).

This sequence belongs to the autoinducer-regulated transcriptional regulatory protein family.

The polypeptide is Transcriptional activator protein SolR (solR) (Ralstonia solanacearum (Pseudomonas solanacearum)).